We begin with the raw amino-acid sequence, 144 residues long: MVSKKNTAEISAKDIWENIWSGVSSLLDFFAVLENLGVVNDKLYVSGLLRKVWLCYSCISVIKCVWKLIKLCKVKFKIDQRLDGEGNGLVKDKLINFKKKYNEHIRHITAALLQDLSYLMVLIYPGTRLFKRLSNIITLCRIIV.

A run of 3 helical transmembrane segments spans residues Asn-18–Phe-30, Val-52–Lys-73, and Thr-109–Lys-131.

Homooligomer. Interacts with PEX11, PEX25 and PEX27.

Its subcellular location is the peroxisome membrane. Its function is as follows. In concert with the three peroxisome divisional factors, PEX11, PEX25 and PEX27, controls peroxisome morphology and abundance under conditions of peroxisome proliferation. Maintains mature peroxisomes in actively dividing cells. This Saccharomyces cerevisiae (strain ATCC 204508 / S288c) (Baker's yeast) protein is Peroxisomal membrane protein PEX34 (PEX34).